The following is a 343-amino-acid chain: tRNA N6-adenosine threonylcarbamoyltransferase (343 aa).

2 residues coordinate Fe cation: histidine 120 and histidine 124. Substrate contacts are provided by residues 142–146, aspartate 175, glycine 188, aspartate 192, and asparagine 281; that span reads VVSGG. Aspartate 310 contacts Fe cation.

The protein belongs to the KAE1 / TsaD family. It depends on Fe(2+) as a cofactor.

It localises to the cytoplasm. The enzyme catalyses L-threonylcarbamoyladenylate + adenosine(37) in tRNA = N(6)-L-threonylcarbamoyladenosine(37) in tRNA + AMP + H(+). In terms of biological role, required for the formation of a threonylcarbamoyl group on adenosine at position 37 (t(6)A37) in tRNAs that read codons beginning with adenine. Is involved in the transfer of the threonylcarbamoyl moiety of threonylcarbamoyl-AMP (TC-AMP) to the N6 group of A37, together with TsaE and TsaB. TsaD likely plays a direct catalytic role in this reaction. This Bacillus thuringiensis (strain Al Hakam) protein is tRNA N6-adenosine threonylcarbamoyltransferase.